We begin with the raw amino-acid sequence, 359 residues long: Putative gluconeogenesis factor (359 aa).

The segment at 317–359 (VGNQDSSAPTVAATEQIRLDGKRPQTGVNGPVGKGPRGDDAWR) is disordered.

Belongs to the gluconeogenesis factor family.

Its subcellular location is the cytoplasm. Functionally, required for morphogenesis under gluconeogenic growth conditions. This is Putative gluconeogenesis factor from Mycobacterium leprae (strain TN).